The primary structure comprises 993 residues: General transcription factor II-I repeat domain-containing protein 1 (993 aa).

2 GTF2I-like repeats span residues 117–211 and 332–426; these read LGPT…EPKS and LRET…DGTT. Residues 461-480 form a disordered region; sequence GSRSEKSSISDECEPGTSSE. 3 GTF2I-like repeats span residues 597 to 691, 727 to 821, and 824 to 918; these read DGIG…LEDC, LSRI…RPDD, and ANRL…ICSE. The disordered stretch occupies residues 916–961; the sequence is CSEPPKIKNGNTGPKRKRKRVSEGNSISSASSNCSSSSSSSSNMDP. The Nuclear localization signal signature appears at 929-936; that stretch reads PKRKRKRV. The span at 938–961 shows a compositional bias: low complexity; it reads EGNSISSASSNCSSSSSSSSNMDP.

It belongs to the TFII-I family. As to quaternary structure, interacts (via repeats 4-5) with foxh1/fast1 (via Fork-head domain). Interacts with smad2 and smad3 (via MH1 domain) in a ligand (activin)-dependent manner. Interacts with pou5f1.1/oct-25 to form a repression complex on the promoters of the gsc and mix2 genes. In terms of tissue distribution, uniformly expressed in the embryo in pre- and early gastrula stages. Enriched in the head region of early neurula through tailbud stages.

The protein resides in the nucleus. Its function is as follows. Transcription factor that activates a subset of organizer-specific genes. Binds to the distal element (DE) of the gsc promoter to regulate its expression. In the presence of pou5f1.1/oct-25, forms a repression complex on the promoter of the gsc and mix2 genes to inhibit their transcription. This chain is General transcription factor II-I repeat domain-containing protein 1 (gtf2ird1), found in Xenopus laevis (African clawed frog).